Here is a 154-residue protein sequence, read N- to C-terminus: Ribosome maturation factor RimP (154 aa).

This sequence belongs to the RimP family.

The protein resides in the cytoplasm. Functionally, required for maturation of 30S ribosomal subunits. The protein is Ribosome maturation factor RimP of Clostridium novyi (strain NT).